The following is a 201-amino-acid chain: LexA repressor (201 aa).

The H-T-H motif DNA-binding region spans 29-49 (VREICKAVGLSSTSSVHFHLK). Active-site for autocatalytic cleavage activity residues include Ser125 and Lys162.

It belongs to the peptidase S24 family. As to quaternary structure, homodimer.

It catalyses the reaction Hydrolysis of Ala-|-Gly bond in repressor LexA.. Represses a number of genes involved in the response to DNA damage (SOS response), including recA and lexA. In the presence of single-stranded DNA, RecA interacts with LexA causing an autocatalytic cleavage which disrupts the DNA-binding part of LexA, leading to derepression of the SOS regulon and eventually DNA repair. This chain is LexA repressor, found in Clostridium botulinum (strain 657 / Type Ba4).